The chain runs to 225 residues: Phosphoribosylformylglycinamidine synthase subunit PurQ (225 aa).

Positions 5-225 constitute a Glutamine amidotransferase type-1 domain; sequence RFGIVVFPGS…WQSIVQSLAG (221 aa). Residue C89 is the Nucleophile of the active site. Active-site residues include H198 and E200.

Part of the FGAM synthase complex composed of 1 PurL, 1 PurQ and 2 PurS subunits.

It is found in the cytoplasm. The catalysed reaction is N(2)-formyl-N(1)-(5-phospho-beta-D-ribosyl)glycinamide + L-glutamine + ATP + H2O = 2-formamido-N(1)-(5-O-phospho-beta-D-ribosyl)acetamidine + L-glutamate + ADP + phosphate + H(+). It carries out the reaction L-glutamine + H2O = L-glutamate + NH4(+). Its pathway is purine metabolism; IMP biosynthesis via de novo pathway; 5-amino-1-(5-phospho-D-ribosyl)imidazole from N(2)-formyl-N(1)-(5-phospho-D-ribosyl)glycinamide: step 1/2. In terms of biological role, part of the phosphoribosylformylglycinamidine synthase complex involved in the purines biosynthetic pathway. Catalyzes the ATP-dependent conversion of formylglycinamide ribonucleotide (FGAR) and glutamine to yield formylglycinamidine ribonucleotide (FGAM) and glutamate. The FGAM synthase complex is composed of three subunits. PurQ produces an ammonia molecule by converting glutamine to glutamate. PurL transfers the ammonia molecule to FGAR to form FGAM in an ATP-dependent manner. PurS interacts with PurQ and PurL and is thought to assist in the transfer of the ammonia molecule from PurQ to PurL. In Synechococcus sp. (strain JA-3-3Ab) (Cyanobacteria bacterium Yellowstone A-Prime), this protein is Phosphoribosylformylglycinamidine synthase subunit PurQ.